A 262-amino-acid chain; its full sequence is Ribose-5-phosphate isomerase A (262 aa).

Substrate-binding positions include T33 to T36, D89 to D92, and K102 to G105. Residue E111 is the Proton acceptor of the active site. K129 contacts substrate.

Belongs to the ribose 5-phosphate isomerase family. Homodimer.

It catalyses the reaction aldehydo-D-ribose 5-phosphate = D-ribulose 5-phosphate. Its pathway is carbohydrate degradation; pentose phosphate pathway; D-ribose 5-phosphate from D-ribulose 5-phosphate (non-oxidative stage): step 1/1. Catalyzes the reversible conversion of ribose-5-phosphate to ribulose 5-phosphate. This chain is Ribose-5-phosphate isomerase A, found in Cereibacter sphaeroides (strain ATCC 17029 / ATH 2.4.9) (Rhodobacter sphaeroides).